Consider the following 416-residue polypeptide: Gamma-glutamyl phosphate reductase (416 aa).

It belongs to the gamma-glutamyl phosphate reductase family.

It localises to the cytoplasm. The enzyme catalyses L-glutamate 5-semialdehyde + phosphate + NADP(+) = L-glutamyl 5-phosphate + NADPH + H(+). The protein operates within amino-acid biosynthesis; L-proline biosynthesis; L-glutamate 5-semialdehyde from L-glutamate: step 2/2. In terms of biological role, catalyzes the NADPH-dependent reduction of L-glutamate 5-phosphate into L-glutamate 5-semialdehyde and phosphate. The product spontaneously undergoes cyclization to form 1-pyrroline-5-carboxylate. This is Gamma-glutamyl phosphate reductase from Vibrio vulnificus (strain CMCP6).